The following is a 228-amino-acid chain: Orotidine 5'-phosphate decarboxylase (228 aa).

Residues D11, K33, 60 to 69, T117, R178, Q186, G206, and R207 each bind substrate; that span reads DLKLHDIPNT. The active-site Proton donor is the K62.

Belongs to the OMP decarboxylase family. Type 1 subfamily. As to quaternary structure, homodimer.

The enzyme catalyses orotidine 5'-phosphate + H(+) = UMP + CO2. It participates in pyrimidine metabolism; UMP biosynthesis via de novo pathway; UMP from orotate: step 2/2. In terms of biological role, catalyzes the decarboxylation of orotidine 5'-monophosphate (OMP) to uridine 5'-monophosphate (UMP). The polypeptide is Orotidine 5'-phosphate decarboxylase (Ehrlichia canis (strain Jake)).